The sequence spans 926 residues: Periplasmic nitrate reductase (926 aa).

A signal peptide (tat-type signal) is located at residues 1–30; the sequence is MNRRDFIKSAAASAACASAGIAIPANLSAA. The 57-residue stretch at 37-93 folds into the 4Fe-4S Mo/W bis-MGD-type domain; it reads WRWDKAACRFCGTGCGIMVATKEGKIVAVKGDPEAPVNRGLNCIKGYFNAKIMYGED. Positions 44, 47, 51, and 79 each coordinate [4Fe-4S] cluster. Residues Lys81, Gln149, Asn174, Cys178, 211–218, Met419, Gln423, Asn529, 554–555, Lys577, Asp604, and 816–825 contribute to the Mo-bis(molybdopterin guanine dinucleotide) site; these read WGANMAEM, SD, and TGRVLEHWHS. A substrate-binding site is contributed by Trp892. The Mo-bis(molybdopterin guanine dinucleotide) site is built by Asn900 and Lys917.

This sequence belongs to the prokaryotic molybdopterin-containing oxidoreductase family. NasA/NapA/NarB subfamily. In terms of assembly, component of the periplasmic nitrate reductase NapAB complex composed of NapA and NapB. Requires [4Fe-4S] cluster as cofactor. It depends on Mo-bis(molybdopterin guanine dinucleotide) as a cofactor. Predicted to be exported by the Tat system. The position of the signal peptide cleavage has not been experimentally proven.

Its subcellular location is the periplasm. The catalysed reaction is 2 Fe(II)-[cytochrome] + nitrate + 2 H(+) = 2 Fe(III)-[cytochrome] + nitrite + H2O. Catalytic subunit of the periplasmic nitrate reductase complex NapAB. Receives electrons from NapB and catalyzes the reduction of nitrate to nitrite. The sequence is that of Periplasmic nitrate reductase from Campylobacter curvus (strain 525.92).